A 191-amino-acid chain; its full sequence is IMP cyclohydrolase (191 aa).

This sequence belongs to the archaeal IMP cyclohydrolase family.

It carries out the reaction IMP + H2O = 5-formamido-1-(5-phospho-D-ribosyl)imidazole-4-carboxamide. It participates in purine metabolism; IMP biosynthesis via de novo pathway; IMP from 5-formamido-1-(5-phospho-D-ribosyl)imidazole-4-carboxamide: step 1/1. Its function is as follows. Catalyzes the cyclization of 5-formylamidoimidazole-4-carboxamide ribonucleotide to IMP. The sequence is that of IMP cyclohydrolase from Natronomonas pharaonis (strain ATCC 35678 / DSM 2160 / CIP 103997 / JCM 8858 / NBRC 14720 / NCIMB 2260 / Gabara) (Halobacterium pharaonis).